The primary structure comprises 509 residues: Maturase K (509 aa).

It belongs to the intron maturase 2 family. MatK subfamily.

Its subcellular location is the plastid. The protein localises to the chloroplast. Functionally, usually encoded in the trnK tRNA gene intron. Probably assists in splicing its own and other chloroplast group II introns. This Portulaca oleracea (Common purslane) protein is Maturase K.